Reading from the N-terminus, the 166-residue chain is Ribosome maturation factor RimP (166 aa).

Belongs to the RimP family.

It localises to the cytoplasm. Functionally, required for maturation of 30S ribosomal subunits. In Psychrobacter arcticus (strain DSM 17307 / VKM B-2377 / 273-4), this protein is Ribosome maturation factor RimP.